Here is an 81-residue protein sequence, read N- to C-terminus: Photosystem I iron-sulfur center (81 aa).

4Fe-4S ferredoxin-type domains follow at residues 2 to 31 (AHSV…MVPW) and 39 to 68 (IASA…VRVY). 8 residues coordinate [4Fe-4S] cluster: cysteine 11, cysteine 14, cysteine 17, cysteine 21, cysteine 48, cysteine 51, cysteine 54, and cysteine 58.

The eukaryotic PSI reaction center is composed of at least 11 subunits. [4Fe-4S] cluster serves as cofactor.

The protein resides in the plastid. Its subcellular location is the chloroplast thylakoid membrane. It catalyses the reaction reduced [plastocyanin] + hnu + oxidized [2Fe-2S]-[ferredoxin] = oxidized [plastocyanin] + reduced [2Fe-2S]-[ferredoxin]. Functionally, apoprotein for the two 4Fe-4S centers FA and FB of photosystem I (PSI); essential for photochemical activity. FB is the terminal electron acceptor of PSI, donating electrons to ferredoxin. The C-terminus interacts with PsaA/B/D and helps assemble the protein into the PSI complex. Required for binding of PsaD and PsaE to PSI. PSI is a plastocyanin-ferredoxin oxidoreductase, converting photonic excitation into a charge separation, which transfers an electron from the donor P700 chlorophyll pair to the spectroscopically characterized acceptors A0, A1, FX, FA and FB in turn. In Gnetum parvifolium (Small-leaved jointfir), this protein is Photosystem I iron-sulfur center.